The following is a 147-amino-acid chain: Biogenesis of lysosome-related organelles complex 1 subunit 1 (147 aa).

2 disordered regions span residues 1-25 and 125-147; these read MLTS…VRRK and SSGA…PSAT.

The protein belongs to the BLOC1S1 family. As to quaternary structure, component of the biogenesis of lysosome-related organelles complex-1 (BLOC-1) composed of Blos1, Blos2, Blos3, Blos4, Dysb, Muted, Pldn and Snapin. Interacts with Pldn.

Functionally, component of the biogenesis of lysosome-related organelles complex-1 (BLOC-1) involved in pigment granule biogenesis and membrane trafficking in synapses. In response to high synaptic activity at neuromuscular junctions, stabilizes Pldn protein levels and, together with Pldn, plays a role in promoting efficient synaptic vesicle recycling and re-formation through early endosomes. The protein is Biogenesis of lysosome-related organelles complex 1 subunit 1 of Drosophila melanogaster (Fruit fly).